The primary structure comprises 861 residues: DNA mismatch repair protein MutS (861 aa).

614–621 provides a ligand contact to ATP; that stretch reads GPNMGGKS.

Belongs to the DNA mismatch repair MutS family.

In terms of biological role, this protein is involved in the repair of mismatches in DNA. It is possible that it carries out the mismatch recognition step. This protein has a weak ATPase activity. The protein is DNA mismatch repair protein MutS of Mannheimia succiniciproducens (strain KCTC 0769BP / MBEL55E).